The following is a 603-amino-acid chain: Aspartate--tRNA(Asp/Asn) ligase (603 aa).

An aspartate region spans residues 205–208; it reads QLFK. Arg-227 contributes to the L-aspartate binding site. ATP contacts are provided by residues 227 to 229 and Gln-236; that span reads RDE. L-aspartate is bound at residue His-463. Glu-497 serves as a coordination point for ATP. L-aspartate is bound at residue Arg-504. 549–552 provides a ligand contact to ATP; sequence GMDR.

The protein belongs to the class-II aminoacyl-tRNA synthetase family. Type 1 subfamily. Homodimer.

The protein resides in the cytoplasm. The enzyme catalyses tRNA(Asx) + L-aspartate + ATP = L-aspartyl-tRNA(Asx) + AMP + diphosphate. Functionally, aspartyl-tRNA synthetase with relaxed tRNA specificity since it is able to aspartylate not only its cognate tRNA(Asp) but also tRNA(Asn). Reaction proceeds in two steps: L-aspartate is first activated by ATP to form Asp-AMP and then transferred to the acceptor end of tRNA(Asp/Asn). This Anaeromyxobacter dehalogenans (strain 2CP-1 / ATCC BAA-258) protein is Aspartate--tRNA(Asp/Asn) ligase.